The following is a 159-amino-acid chain: 6,7-dimethyl-8-ribityllumazine synthase (159 aa).

Residues F22, 57-59 (AVE), and 81-83 (AVI) each bind 5-amino-6-(D-ribitylamino)uracil. Residue 86-87 (GT) participates in (2S)-2-hydroxy-3-oxobutyl phosphate binding. H89 functions as the Proton donor in the catalytic mechanism. Position 114 (F114) interacts with 5-amino-6-(D-ribitylamino)uracil. R128 lines the (2S)-2-hydroxy-3-oxobutyl phosphate pocket.

This sequence belongs to the DMRL synthase family. As to quaternary structure, forms an icosahedral capsid composed of 60 subunits, arranged as a dodecamer of pentamers.

The catalysed reaction is (2S)-2-hydroxy-3-oxobutyl phosphate + 5-amino-6-(D-ribitylamino)uracil = 6,7-dimethyl-8-(1-D-ribityl)lumazine + phosphate + 2 H2O + H(+). Its pathway is cofactor biosynthesis; riboflavin biosynthesis; riboflavin from 2-hydroxy-3-oxobutyl phosphate and 5-amino-6-(D-ribitylamino)uracil: step 1/2. In terms of biological role, catalyzes the formation of 6,7-dimethyl-8-ribityllumazine by condensation of 5-amino-6-(D-ribitylamino)uracil with 3,4-dihydroxy-2-butanone 4-phosphate. This is the penultimate step in the biosynthesis of riboflavin. The polypeptide is 6,7-dimethyl-8-ribityllumazine synthase (Shewanella denitrificans (strain OS217 / ATCC BAA-1090 / DSM 15013)).